We begin with the raw amino-acid sequence, 234 residues long: UPF0502 protein BPSS1373 (234 aa).

The protein belongs to the UPF0502 family.

The sequence is that of UPF0502 protein BPSS1373 from Burkholderia pseudomallei (strain K96243).